The primary structure comprises 155 residues: Ribosome maturation factor RimP (155 aa).

The protein belongs to the RimP family.

It localises to the cytoplasm. Functionally, required for maturation of 30S ribosomal subunits. In Dichelobacter nodosus (strain VCS1703A), this protein is Ribosome maturation factor RimP.